A 257-amino-acid chain; its full sequence is Capsid protein (257 aa).

This sequence belongs to the geminiviridae capsid protein family.

It is found in the virion. In terms of biological role, encapsidates the viral DNA into characteristic twinned ('geminate') particles. Plays a role in protection of the genome from degradation, virus acquisition and transmission by insect vectors, infectivity, and systemic movement. This is Capsid protein from Capsicum annuum (Capsicum pepper).